A 323-amino-acid chain; its full sequence is Sphingolipid delta(4)-desaturase/C4-monooxygenase DES2 (323 aa).

Glycine 2 is lipidated: N-myristoyl glycine. A run of 2 helical transmembrane segments spans residues 41-61 (PNIKWTVLGMVLVQVLACWLV) and 68-88 (WLLFWAYAFGGCINHSLTLAI). The Histidine box-1 signature appears at 89-93 (HDISH). The tract at residues 95–99 (TAFGT) is required for C4-hydroxylase activity. Residues 128-132 (HVDHH) carry the Histidine box-2 motif. Residues 200-220 (IFALWGIKAIVYLLASSLLGL) form a helical membrane-spanning segment. The Histidine box-3 motif lies at 259-263 (HVEHH).

This sequence belongs to the fatty acid desaturase type 1 family. DEGS subfamily.

The protein localises to the endoplasmic reticulum membrane. It catalyses the reaction a dihydroceramide + 2 Fe(II)-[cytochrome b5] + O2 + 2 H(+) = a phytoceramide + 2 Fe(III)-[cytochrome b5] + H2O. The catalysed reaction is an N-acylsphinganine + 2 Fe(II)-[cytochrome b5] + O2 + 2 H(+) = an N-acylsphing-4-enine + 2 Fe(III)-[cytochrome b5] + 2 H2O. The enzyme catalyses N-octanoylsphinganine + 2 Fe(II)-[cytochrome b5] + O2 + 2 H(+) = N-octanoyl-4-hydroxysphinganine + 2 Fe(III)-[cytochrome b5] + H2O. It carries out the reaction an N-acylsphinganine + 2 Fe(II)-[cytochrome b5] + O2 + 2 H(+) = an N-acyl-(4R)-4-hydroxysphinganine + 2 Fe(III)-[cytochrome b5] + H2O. The protein operates within membrane lipid metabolism; sphingolipid biosynthesis. Bifunctional enzyme which acts both as a sphingolipid delta(4)-desaturase and a sphingolipid C4-monooxygenase. This chain is Sphingolipid delta(4)-desaturase/C4-monooxygenase DES2, found in Rattus norvegicus (Rat).